A 458-amino-acid polypeptide reads, in one-letter code: Bifunctional protein GlmU (458 aa).

Residues 1 to 228 (MHPKLDILIL…DWEVLGVNSK (228 aa)) form a pyrophosphorylase region. UDP-N-acetyl-alpha-D-glucosamine contacts are provided by residues 10–13 (LAAG), K24, Q75, 80–81 (GT), 102–104 (YGD), G139, E153, N168, and N226. Mg(2+) is bound at residue D104. N226 serves as a coordination point for Mg(2+). Residues 229 to 249 (AQLAELERIHQNEVAQRLLAD) are linker. The interval 250–458 (GVTLMDPARL…KRPIKPKKEG (209 aa)) is N-acetyltransferase. UDP-N-acetyl-alpha-D-glucosamine is bound by residues R332 and K350. The active-site Proton acceptor is H362. 2 residues coordinate UDP-N-acetyl-alpha-D-glucosamine: Y365 and N376. Acetyl-CoA-binding positions include A379, 385–386 (NY), S404, A422, and R439.

It in the N-terminal section; belongs to the N-acetylglucosamine-1-phosphate uridyltransferase family. In the C-terminal section; belongs to the transferase hexapeptide repeat family. As to quaternary structure, homotrimer. It depends on Mg(2+) as a cofactor.

The protein localises to the cytoplasm. The enzyme catalyses alpha-D-glucosamine 1-phosphate + acetyl-CoA = N-acetyl-alpha-D-glucosamine 1-phosphate + CoA + H(+). It catalyses the reaction N-acetyl-alpha-D-glucosamine 1-phosphate + UTP + H(+) = UDP-N-acetyl-alpha-D-glucosamine + diphosphate. The protein operates within nucleotide-sugar biosynthesis; UDP-N-acetyl-alpha-D-glucosamine biosynthesis; N-acetyl-alpha-D-glucosamine 1-phosphate from alpha-D-glucosamine 6-phosphate (route II): step 2/2. Its pathway is nucleotide-sugar biosynthesis; UDP-N-acetyl-alpha-D-glucosamine biosynthesis; UDP-N-acetyl-alpha-D-glucosamine from N-acetyl-alpha-D-glucosamine 1-phosphate: step 1/1. It functions in the pathway bacterial outer membrane biogenesis; LPS lipid A biosynthesis. In terms of biological role, catalyzes the last two sequential reactions in the de novo biosynthetic pathway for UDP-N-acetylglucosamine (UDP-GlcNAc). The C-terminal domain catalyzes the transfer of acetyl group from acetyl coenzyme A to glucosamine-1-phosphate (GlcN-1-P) to produce N-acetylglucosamine-1-phosphate (GlcNAc-1-P), which is converted into UDP-GlcNAc by the transfer of uridine 5-monophosphate (from uridine 5-triphosphate), a reaction catalyzed by the N-terminal domain. The chain is Bifunctional protein GlmU from Thiobacillus denitrificans (strain ATCC 25259 / T1).